A 156-amino-acid chain; its full sequence is MSLMHRASRVLPAGGWSGAADHIALDYEARFLRRKRLVAASGAEFLVDLPEVTNLRGGEAFALEDGRLIEVRCGLEPVLVVTGDLTRLAWHVGNRHTPCQIEPDRLLIRDDHVLETMLRGLGARVERRMEPFRPESGAYGSGRTMGHDHGPFHVHA.

Positions 133 to 156 (RPESGAYGSGRTMGHDHGPFHVHA) are disordered. Residues 145-156 (MGHDHGPFHVHA) show a composition bias toward basic and acidic residues.

Belongs to the UreE family.

It is found in the cytoplasm. Functionally, involved in urease metallocenter assembly. Binds nickel. Probably functions as a nickel donor during metallocenter assembly. The polypeptide is Urease accessory protein UreE (Rhodobacter capsulatus (Rhodopseudomonas capsulata)).